We begin with the raw amino-acid sequence, 256 residues long: Large ribosomal subunit protein bL28m (256 aa).

The transit peptide at Met1–Lys55 directs the protein to the mitochondrion.

Belongs to the bacterial ribosomal protein bL28 family. In terms of assembly, component of the mitochondrial large ribosomal subunit (mt-LSU). Mature mammalian 55S mitochondrial ribosomes consist of a small (28S) and a large (39S) subunit. The 28S small subunit contains a 12S ribosomal RNA (12S mt-rRNA) and 30 different proteins. The 39S large subunit contains a 16S rRNA (16S mt-rRNA), a copy of mitochondrial valine transfer RNA (mt-tRNA(Val)), which plays an integral structural role, and 52 different proteins. Interacts with OXA1L. In terms of tissue distribution, found in a variety of normal tissues including spleen, testes, thymus, liver, kidney, brain, adrenal, lung and retinal tissue.

It is found in the mitochondrion. The chain is Large ribosomal subunit protein bL28m (MRPL28) from Homo sapiens (Human).